The following is a 121-amino-acid chain: Lysozyme (121 aa).

The region spanning 1 to 121 is the C-type lysozyme domain; sequence KTFTRCELVQ…NKPLPDISKC (121 aa). 4 disulfides stabilise this stretch: Cys6–Cys121, Cys27–Cys110, Cys62–Cys76, and Cys72–Cys90. Catalysis depends on residues Glu32 and Asp50.

This sequence belongs to the glycosyl hydrolase 22 family.

It catalyses the reaction Hydrolysis of (1-&gt;4)-beta-linkages between N-acetylmuramic acid and N-acetyl-D-glucosamine residues in a peptidoglycan and between N-acetyl-D-glucosamine residues in chitodextrins.. Its function is as follows. Lysozymes have primarily a bacteriolytic function; those in tissues and body fluids are associated with the monocyte-macrophage system and enhance the activity of immunoagents. The chain is Lysozyme from Galleria mellonella (Greater wax moth).